The sequence spans 552 residues: 5'-AMP-activated protein kinase catalytic subunit alpha-2 (552 aa).

Positions Y16 to F268 constitute a Protein kinase domain. ATP-binding positions include L22–V30 and K45. D139 serves as the catalytic Proton acceptor. The residue at position 172 (T172) is a Phosphothreonine; by LKB1 and CaMKK2. Phosphothreonine is present on T258. The segment at E291–D376 is AIS. Phosphoserine is present on residues S377 and S491.

This sequence belongs to the protein kinase superfamily. CAMK Ser/Thr protein kinase family. SNF1 subfamily. AMPK is a heterotrimer of an alpha catalytic subunit (PRKAA1 or PRKAA2), a beta (PRKAB1 or PRKAB2) and a gamma non-catalytic subunits (PRKAG1, PRKAG2 or PRKAG3). Interacts with FNIP1 and FNIP2. Interacts with DUSP29. Interacts with ARF6. The phosphorylated form at Thr-172 mediated by CamKK2 interacts with ACSS2. Requires Mg(2+) as cofactor. In terms of processing, ubiquitinated. Post-translationally, phosphorylated at Thr-172 by STK11/LKB1 in complex with STE20-related adapter-alpha (STRADA) pseudo kinase and CAB39. Also phosphorylated at Thr-172 by CAMKK2; triggered by a rise in intracellular calcium ions, without detectable changes in the AMP/ATP ratio. CAMKK1 can also phosphorylate Thr-172, but at much lower level. Dephosphorylated by protein phosphatase 2A and 2C (PP2A and PP2C). Phosphorylated by ULK1; leading to negatively regulate AMPK activity and suggesting the existence of a regulatory feedback loop between ULK1 and AMPK. Dephosphorylated by PPM1A and PPM1B at Thr-172 (mediated by STK11/LKB1).

The protein localises to the cytoplasm. The protein resides in the nucleus. It catalyses the reaction L-seryl-[protein] + ATP = O-phospho-L-seryl-[protein] + ADP + H(+). The enzyme catalyses L-threonyl-[protein] + ATP = O-phospho-L-threonyl-[protein] + ADP + H(+). The catalysed reaction is L-seryl-[acetyl-CoA carboxylase] + ATP = O-phospho-L-seryl-[acetyl-CoA carboxylase] + ADP + H(+). It carries out the reaction L-seryl-[3-hydroxy-3-methylglutaryl-coenzyme A reductase] + ATP = O-phospho-L-seryl-[3-hydroxy-3-methylglutaryl-coenzyme A reductase] + ADP + H(+). Activated by phosphorylation on Thr-172. Binding of AMP to non-catalytic gamma subunit (PRKAG1, PRKAG2 or PRKAG3) results in allosteric activation, inducing phosphorylation on Thr-172. AMP-binding to gamma subunit also sustains activity by preventing dephosphorylation of Thr-172. ADP also stimulates Thr-172 phosphorylation, without stimulating already phosphorylated AMPK. ATP promotes dephosphorylation of Thr-172, rendering the enzyme inactive. Under physiological conditions AMPK mainly exists in its inactive form in complex with ATP, which is much more abundant than AMP. Selectively inhibited by compound C (6-[4-(2-Piperidin-1-yl-ethoxy)-phenyl)]-3-pyridin-4-yl-pyyrazolo[1,5-a] pyrimidine. Activated by resveratrol, a natural polyphenol present in red wine, and S17834, a synthetic polyphenol. Salicylate/aspirin directly activates kinase activity, primarily by inhibiting Thr-172 dephosphorylation. Its function is as follows. Catalytic subunit of AMP-activated protein kinase (AMPK), an energy sensor protein kinase that plays a key role in regulating cellular energy metabolism. In response to reduction of intracellular ATP levels, AMPK activates energy-producing pathways and inhibits energy-consuming processes: inhibits protein, carbohydrate and lipid biosynthesis, as well as cell growth and proliferation. AMPK acts via direct phosphorylation of metabolic enzymes, and by longer-term effects via phosphorylation of transcription regulators. Regulates lipid synthesis by phosphorylating and inactivating lipid metabolic enzymes such as ACACA, ACACB, GYS1, HMGCR and LIPE; regulates fatty acid and cholesterol synthesis by phosphorylating acetyl-CoA carboxylase (ACACA and ACACB) and hormone-sensitive lipase (LIPE) enzymes, respectively. Promotes lipolysis of lipid droplets by mediating phosphorylation of isoform 1 of CHKA (CHKalpha2). Regulates insulin-signaling and glycolysis by phosphorylating IRS1, PFKFB2 and PFKFB3. Involved in insulin receptor/INSR internalization. AMPK stimulates glucose uptake in muscle by increasing the translocation of the glucose transporter SLC2A4/GLUT4 to the plasma membrane, possibly by mediating phosphorylation of TBC1D4/AS160. Regulates transcription and chromatin structure by phosphorylating transcription regulators involved in energy metabolism such as CRTC2/TORC2, FOXO3, histone H2B, HDAC5, MEF2C, MLXIPL/ChREBP, EP300, HNF4A, p53/TP53, SREBF1, SREBF2 and PPARGC1A. Acts as a key regulator of glucose homeostasis in liver by phosphorylating CRTC2/TORC2, leading to CRTC2/TORC2 sequestration in the cytoplasm. In response to stress, phosphorylates 'Ser-36' of histone H2B (H2BS36ph), leading to promote transcription. Acts as a key regulator of cell growth and proliferation by phosphorylating FNIP1, TSC2, RPTOR, WDR24 and ATG1/ULK1: in response to nutrient limitation, negatively regulates the mTORC1 complex by phosphorylating RPTOR component of the mTORC1 complex and by phosphorylating and activating TSC2. Also phosphorylates and inhibits GATOR2 subunit WDR24 in response to nutrient limitation, leading to suppress glucose-mediated mTORC1 activation. In response to energetic stress, phosphorylates FNIP1, inactivating the non-canonical mTORC1 signaling, thereby promoting nuclear translocation of TFEB and TFE3, and inducing transcription of lysosomal or autophagy genes. In response to nutrient limitation, promotes autophagy by phosphorylating and activating ATG1/ULK1. In that process, it also activates WDR45/WIPI4. Phosphorylates CASP6, thereby preventing its autoprocessing and subsequent activation. AMPK also acts as a regulator of circadian rhythm by mediating phosphorylation of CRY1, leading to destabilize it. May regulate the Wnt signaling pathway by phosphorylating CTNNB1, leading to stabilize it. Also acts as a regulator of cellular polarity by remodeling the actin cytoskeleton; probably by indirectly activating myosin. Also phosphorylates CFTR, EEF2K, KLC1, NOS3 and SLC12A1. Plays an important role in the differential regulation of pro-autophagy (composed of PIK3C3, BECN1, PIK3R4 and UVRAG or ATG14) and non-autophagy (composed of PIK3C3, BECN1 and PIK3R4) complexes, in response to glucose starvation. Can inhibit the non-autophagy complex by phosphorylating PIK3C3 and can activate the pro-autophagy complex by phosphorylating BECN1. Upon glucose starvation, promotes ARF6 activation in a kinase-independent manner leading to cell migration. Upon glucose deprivation mediates the phosphorylation of ACSS2 at 'Ser-659', which exposes the nuclear localization signal of ACSS2, required for its interaction with KPNA1 and nuclear translocation. Upon stress, regulates mitochondrial fragmentation through phosphorylation of MTFR1L. This is 5'-AMP-activated protein kinase catalytic subunit alpha-2 from Mus musculus (Mouse).